The primary structure comprises 170 residues: Photosystem I assembly protein Ycf3 (170 aa).

TPR repeat units follow at residues 35 to 68 (AFCYYRDGMSAQSEGEYAEALENYYEALRLEEDP), 72 to 105 (SYIIYNIGLIYASNGEHIKALEYYHQSLELNPRL), and 120 to 153 (GLKAADKQDNNMSKSMFDKAAEYWKQAIYLAPNN).

Belongs to the Ycf3 family.

The protein resides in the plastid. Its subcellular location is the chloroplast thylakoid membrane. Essential for the assembly of the photosystem I (PSI) complex. May act as a chaperone-like factor to guide the assembly of the PSI subunits. The sequence is that of Photosystem I assembly protein Ycf3 from Gracilaria tenuistipitata var. liui (Red alga).